Reading from the N-terminus, the 154-residue chain is 3-hydroxyacyl-[acyl-carrier-protein] dehydratase FabZ (154 aa).

Residue His54 is part of the active site.

Belongs to the thioester dehydratase family. FabZ subfamily.

The protein localises to the cytoplasm. It catalyses the reaction a (3R)-hydroxyacyl-[ACP] = a (2E)-enoyl-[ACP] + H2O. In terms of biological role, involved in unsaturated fatty acids biosynthesis. Catalyzes the dehydration of short chain beta-hydroxyacyl-ACPs and long chain saturated and unsaturated beta-hydroxyacyl-ACPs. This chain is 3-hydroxyacyl-[acyl-carrier-protein] dehydratase FabZ, found in Shewanella oneidensis (strain ATCC 700550 / JCM 31522 / CIP 106686 / LMG 19005 / NCIMB 14063 / MR-1).